A 338-amino-acid polypeptide reads, in one-letter code: MWEANPEMFHKAEELFSKTTNNEVDDMDTSDTQWGWFYLAECGKWHMFQPDTNSQCSVSSEDIEKSFKTNPCGSISFTTSKFSYKIDFAEMKQMNLTTGKQRLIKRAPFSISAFSYICENEAIPMPPHWENVNTQVPYQLIPLHNQTHEYNEVANLFGKTMDRNRIKRIQRIQNLDLWEFFCRKKAQLKKKRGVPQINEQMLFHGTSSEFVEAICIHNFDWRINGIHGAVFGKGTYFARDAAYSSRFCKDDIKHGNTFQIHGVSLQQRHLFRTYKSMFLARVLIGDYINGDSKYMRPPSKDGSYVNLYDSCVDDTWNPKIFVVFDANQIYPEYLIDFH.

Glu13 carries the post-translational modification ADP-ribosyl glutamic acid. Lys18 is modified (N6-(ADP-ribosyl)lysine). The WWE domain occupies 22–106 (NEVDDMDTSD…TTGKQRLIKR (85 aa)). ADP-ribosylcysteine is present on residues Cys56 and Cys72. Asp87 carries the post-translational modification ADP-ribosyl aspartic acid. Residues 123-338 (IPMPPHWENV…IYPEYLIDFH (216 aa)) form the PARP catalytic domain.

This sequence belongs to the ARTD/PARP family. Interacts with PARP12; this interaction plays a role in zika virus suppression. Auto-mono-ADP-ribosylated.

The protein resides in the nucleus. Its subcellular location is the nuclear pore complex. It carries out the reaction L-aspartyl-[protein] + NAD(+) = 4-O-(ADP-D-ribosyl)-L-aspartyl-[protein] + nicotinamide. The catalysed reaction is L-cysteinyl-[protein] + NAD(+) = S-(ADP-D-ribosyl)-L-cysteinyl-[protein] + nicotinamide + H(+). The enzyme catalyses L-glutamyl-[protein] + NAD(+) = 5-O-(ADP-D-ribosyl)-L-glutamyl-[protein] + nicotinamide. It catalyses the reaction L-lysyl-[protein] + NAD(+) = N(6)-(ADP-D-ribosyl)-L-lysyl-[protein] + nicotinamide + H(+). Its function is as follows. Mono-ADP-ribosyltransferase that mediates mono-ADP-ribosylation of target proteins. Plays a role in nuclear envelope stability and nuclear remodeling during spermiogenesis. Inhibits the type I interferon activated signaling pathway. Mechanistically, mono-ADP-ribosylates beta-TrCP/BTRC to promote IFNAR1 ubiquitination and protect BTRC from ubiquitin-proteasome degradation. Additionally, acts as an antiviral factor by cooperating with PARP12 to suppress Zika virus replication, independent of IFNAR1 regulation or intrinsic PARP enzymatic activity. Instead, facilitates the degradation of viral NS1 and NS3 proteins, potentially disrupting viral replication. The chain is Protein mono-ADP-ribosyltransferase PARP11 from Homo sapiens (Human).